Here is an 84-residue protein sequence, read N- to C-terminus: Apovitellenin-1 (84 aa).

The protein belongs to the apovitellenin family. Monomer.

In terms of biological role, protein component of the very low density lipoprotein (VLDL) of egg-laying females. Potent lipoprotein lipase inhibitor, preventing the loss of triglycerides from VLDL on their way from the liver to the growing oocytes. This Dromaius novaehollandiae (Emu) protein is Apovitellenin-1.